Reading from the N-terminus, the 1891-residue chain is Transcription initiation factor TFIID subunit 1 (1891 aa).

3 disordered regions span residues 1–34 (MGPG…AGGG), 154–180 (KLMP…GVSE), and 197–224 (ASEK…SESK). The Protein kinase 1 domain occupies 1 to 435 (MGPGWAGLLQ…VTQLHWEDDI (435 aa)). The span at 156-165 (MPPPPPPPGP) shows a compositional bias: pro residues. Low complexity predominate over residues 197-208 (ASEKVDFSSSSD). A Phosphoserine; by autocatalysis modification is found at Ser-328. A disordered region spans residues 535 to 556 (PDEKEEATSNSPSKENKKESSL). The interval 538 to 997 (KEEATSNSPS…KIPNKPTQQK (460 aa)) is histone acetyltransferase (HAT). An N6-acetyllysine modification is found at Lys-565. Residues Lys-570 and Lys-583 each participate in a glycyl lysine isopeptide (Lys-Gly) (interchain with G-Cter in SUMO2) cross-link. 3 disordered regions span residues 990–1009 (PNKP…KKTV), 1128–1148 (MLQN…QERK), and 1254–1278 (RLKR…MKER). Basic and acidic residues-rich tracts occupy residues 995–1004 (QQKDDKEPQP), 1139–1148 (SREREEQERK), and 1254–1270 (RLKR…PPEK). Residues 1216–1294 (VRIRTTKDEE…CGACGAIGHM (79 aa)) constitute a DNA-binding region (HMG box). The interaction with ASF1A and ASF1B stretch occupies residues 1363 to 1650 (VLKFPKQQLP…TAKEAALEEA (288 aa)). A Nuclear localization signal motif is present at residues 1372–1379 (PPKKKRRV). 2 consecutive Bromo domains span residues 1397 to 1505 (RRRT…LKEK) and 1519 to 1628 (LLDD…LTEY). The region spanning 1446 to 1891 (MDLQTLRENV…AGDTDLDSDE (446 aa)) is the Protein kinase 2 domain. 2 disordered regions span residues 1651–1676 (ELES…NNTS) and 1690–1891 (SNLS…DSDE). Positions 1659–1668 (TPGPYTPQPP) are enriched in pro residues. 2 positions are modified to phosphoserine: Ser-1690 and Ser-1693. Positions 1690–1708 (SNLSVLDIPSATSEKQLTQ) are enriched in polar residues. Acidic residues-rich tracts occupy residues 1711-1723 (GDGD…EEEG) and 1741-1756 (EGED…EEGD). Low complexity predominate over residues 1764–1778 (LSESGSDSDVESGSL). Phosphoserine is present on residues Ser-1799, Ser-1802, and Ser-1820. A compositionally biased stretch (polar residues) spans 1830 to 1840 (KSNTQDTSFSS). Positions 1846-1855 (VSEEEEDEEE) are enriched in acidic residues. Residue Ser-1847 is modified to Phosphoserine. Positions 1858 to 1867 (SGPSVLSQVH) are enriched in polar residues.

It belongs to the TAF1 family. In terms of assembly, component of the TFIID basal transcription factor complex, composed of TATA-box-binding protein TBP, and a number of TBP-associated factors (TAFs). TFIID consists of at least TBP, TAF1, TAF2, TAF3, TAF4, TAF5, TAF6, TAF7, TAF8, TAF9, TAF10, TAF11, TAF12 and TAF13. Interacts with TAF7; the interaction is direct. TAF1, when part of the TFIID complex, interacts with C-terminus of TP53. Part of a TFIID-containing RNA polymerase II pre-initiation complex that is composed of TBP and at least GTF2A1, GTF2A2, GTF2E1, GTF2E2, GTF2F1, GTF2H2, GTF2H3, GTF2H4, GTF2H5, GTF2B, TCEA1, ERCC2, ERCC3, TAF1, TAF2, TAF3, TAF4, TAF5, TAF6, TAF7, TAF8, TAF9, TAF10, TAF11, TAF12 and TAF13. Component of some MLL1/MLL complex, at least composed of the core components KMT2A/MLL1, ASH2L, HCFC1/HCF1, WDR5 and RBBP5, as well as the facultative components BACC1, CHD8, E2F6, HSP70, INO80C, KANSL1, LAS1L, MAX, MCRS1, MGA, KAT8/MOF, PELP1, PHF20, PRP31, RING2, RUVB1/TIP49A, RUVB2/TIP49B, SENP3, TAF1, TAF4, TAF6, TAF7, TAF9 and TEX10. RB1 interacts with the N-terminal domain of TAF1. Interacts with ASF1A and ASF1B. Interacts (via bromo domains) with acetylated lysine residues on the N-terminus of histone H1.4, H2A, H2B, H3 and H4 (in vitro). The cofactor is Mg(2+). Post-translationally, phosphorylated by casein kinase II in vitro.

The protein localises to the nucleus. The catalysed reaction is L-seryl-[protein] + ATP = O-phospho-L-seryl-[protein] + ADP + H(+). The enzyme catalyses L-threonyl-[protein] + ATP = O-phospho-L-threonyl-[protein] + ADP + H(+). It carries out the reaction L-lysyl-[protein] + acetyl-CoA = N(6)-acetyl-L-lysyl-[protein] + CoA + H(+). Autophosphorylates on Ser residues. Inhibited by retinoblastoma tumor suppressor protein, RB1. Binding to TAF1 or CIITA inhibits the histone acetyltransferase activity. The TFIID basal transcription factor complex plays a major role in the initiation of RNA polymerase II (Pol II)-dependent transcription. TFIID recognizes and binds promoters with or without a TATA box via its subunit TBP, a TATA-box-binding protein, and promotes assembly of the pre-initiation complex (PIC). The TFIID complex consists of TBP and TBP-associated factors (TAFs), including TAF1, TAF2, TAF3, TAF4, TAF5, TAF6, TAF7, TAF8, TAF9, TAF10, TAF11, TAF12 and TAF13. TAF1 is the largest component and core scaffold of the TFIID complex, involved in nucleating complex assembly. TAF1 forms a promoter DNA binding subcomplex of TFIID, together with TAF7 and TAF2. Contains novel N- and C-terminal Ser/Thr kinase domains which can autophosphorylate or transphosphorylate other transcription factors. Phosphorylates TP53 on 'Thr-55' which leads to MDM2-mediated degradation of TP53. Phosphorylates GTF2A1 and GTF2F1 on Ser residues. Possesses DNA-binding activity. Exhibits histone acetyltransferase activity towards histones H3 and H4. Essential for progression of the G1 phase of the cell cycle. The polypeptide is Transcription initiation factor TFIID subunit 1 (Mus musculus (Mouse)).